Here is a 111-residue protein sequence, read N- to C-terminus: uncharacterized protein (111 aa).

Residues L4–X51 are a coiled coil.

This is an uncharacterized protein from Treponema pallidum (strain Nichols).